The primary structure comprises 210 residues: Ribosomal RNA large subunit methyltransferase E (210 aa).

Residues G61, W63, D81, D97, and D122 each contribute to the S-adenosyl-L-methionine site. K162 (proton acceptor) is an active-site residue. Basic and acidic residues predominate over residues 187–196 (KPEASRKRSP). The disordered stretch occupies residues 187–210 (KPEASRKRSPEVYALGQGKRAHMK).

The protein belongs to the class I-like SAM-binding methyltransferase superfamily. RNA methyltransferase RlmE family.

The protein resides in the cytoplasm. The catalysed reaction is uridine(2552) in 23S rRNA + S-adenosyl-L-methionine = 2'-O-methyluridine(2552) in 23S rRNA + S-adenosyl-L-homocysteine + H(+). Specifically methylates the uridine in position 2552 of 23S rRNA at the 2'-O position of the ribose in the fully assembled 50S ribosomal subunit. The polypeptide is Ribosomal RNA large subunit methyltransferase E (Stenotrophomonas maltophilia (strain K279a)).